Reading from the N-terminus, the 63-residue chain is Large ribosomal subunit protein uL30 (63 aa).

Belongs to the universal ribosomal protein uL30 family. In terms of assembly, part of the 50S ribosomal subunit.

The protein is Large ribosomal subunit protein uL30 of Rickettsia felis (strain ATCC VR-1525 / URRWXCal2) (Rickettsia azadi).